Reading from the N-terminus, the 253-residue chain is Ubiquinone biosynthesis O-methyltransferase (253 aa).

S-adenosyl-L-methionine is bound by residues Arg-47, Gly-78, Asp-99, and Met-141.

Belongs to the methyltransferase superfamily. UbiG/COQ3 family.

It carries out the reaction a 3-demethylubiquinol + S-adenosyl-L-methionine = a ubiquinol + S-adenosyl-L-homocysteine + H(+). The enzyme catalyses a 3-(all-trans-polyprenyl)benzene-1,2-diol + S-adenosyl-L-methionine = a 2-methoxy-6-(all-trans-polyprenyl)phenol + S-adenosyl-L-homocysteine + H(+). It functions in the pathway cofactor biosynthesis; ubiquinone biosynthesis. Functionally, O-methyltransferase that catalyzes the 2 O-methylation steps in the ubiquinone biosynthetic pathway. The chain is Ubiquinone biosynthesis O-methyltransferase from Rhodopseudomonas palustris (strain ATCC BAA-98 / CGA009).